A 461-amino-acid polypeptide reads, in one-letter code: D-phenylhydantoinase (461 aa).

A divalent metal cation is bound by residues His59, His61, and Lys151. Residue Lys151 is modified to N6-carboxylysine. Tyr156 is a substrate binding site. The a divalent metal cation site is built by His182 and His239. Ser286 serves as a coordination point for substrate. A divalent metal cation is bound at residue Asp313. Asn335 contributes to the substrate binding site.

Belongs to the metallo-dependent hydrolases superfamily. Hydantoinase/dihydropyrimidinase family. Homotetramer. A divalent metal cation is required as a cofactor. Post-translationally, carboxylation allows a single lysine to coordinate two divalent metal cations.

It carries out the reaction D-5-phenylhydantoin + H2O = N-carbamoyl-D-phenylglycine + H(+). Its function is as follows. Catalyzes the stereospecific hydrolysis of the cyclic amide bond of D-hydantoin derivatives with an aromatic side chains at the 5'-position. Has no activity on dihydropyrimidines. The physiological function is unknown. In Escherichia coli O6:K15:H31 (strain 536 / UPEC), this protein is D-phenylhydantoinase.